The sequence spans 201 residues: Peptidyl-tRNA hydrolase (201 aa).

TRNA is bound at residue Y14. H19 functions as the Proton acceptor in the catalytic mechanism. TRNA contacts are provided by Y64, N66, and N112.

This sequence belongs to the PTH family. Monomer.

The protein localises to the cytoplasm. The enzyme catalyses an N-acyl-L-alpha-aminoacyl-tRNA + H2O = an N-acyl-L-amino acid + a tRNA + H(+). Hydrolyzes ribosome-free peptidyl-tRNAs (with 1 or more amino acids incorporated), which drop off the ribosome during protein synthesis, or as a result of ribosome stalling. Its function is as follows. Catalyzes the release of premature peptidyl moieties from peptidyl-tRNA molecules trapped in stalled 50S ribosomal subunits, and thus maintains levels of free tRNAs and 50S ribosomes. The chain is Peptidyl-tRNA hydrolase from Rhodopseudomonas palustris (strain BisB18).